The primary structure comprises 1132 residues: MASGSRTKHSHQSGQGQVQAQSSGTSNVNYKDSISKAIAQYTADARLHAVFEQSGESGKSFDYSQSIKTTTQSVVPEQQITAYLTKIQRGGHIQPFGCMIAVDEASFRVIAYSENACEMLSLTPQSVPSLERPEILTVGTDVRTLFTPSSSVLLERAFGAREITLLNPIWIHSKNSGKPFYAILHRVDVGIVIDLEPARTEDPALSIAGAVQSQKLAVRAISHLQSLPGGDVKLLCDTVVESVRELTGYDRVMVYKFHEDEHGEVVAESKIPDLEPYIGLHYPATDIPQASRFLFKQNRVRMIVDCHATPVRVVQDESLMQPLCLVGSTLRAPHGCHAQYMANMGSIASLTLAVIINGNDEEAVGGRSSMRLWGLVVGHHTSARCIPFPLRYACEFLMQAFGLQLNMELQLASQLSEKHVLRTQTLLCDMLLRDSPTGIVIQSPSIMDLVKCDGAALYCQGKYYPLGVTPTEAQIKDIVEWLLTYHGDSTGLSTDSLADAGYPGAALLGDAVCGMAVAYITSKDFLFWFRSHTAKEIKWGGAKHHPEDKDDGQRMHPRSSFKAFLEVVKSRSLPWENAEMDAIHSLLILRDSFKDAEASNSKAVVHAQLGEMELQGIDELSSVAREMVRLIETATAPIFAVDVEGRINGWNAKVAELTDLSVEEAMGKSLVHDLVHKESQETAEKLLFNALRGEEDKNVEIKLRTFGPEQLKKAVFVVVNACSSKDYTNNIVGVCFVGQDVTGQKVVMDKFIHIQGDYKAIVHSPNPLIPPIFASDENTCCSEWNTAMEKLTGWSRGEIIGKMLVGEIFGSCCRLKGPDAMTKFMIVLHNAIGVQDTDKFPFSFFDRNGKYVQALLTANKRVNMEGQIIGAFCFIQIASPELQQALRVQRQQEKKCYSQMKELAYLCQEIKSPLNGIRFTNSLLEATDLTENQKQYLETSAACERQMSKIIRDVDLENIEDGSLTLEKEEFFLGSVIDAVVSQVMLLLRERSVQLIRDIPEEIKTLTVHGDQVRIQQVLADFLLNMVRYAPSPDGWVEIQLQPNMKQISDEVTVVHIEFRIVCPGEGLPPELVQDMFHSSRWVTKEGLGLSMCRKILKLMNGDIQYIRESERCYFLIILDLPMTRRGSKSLG.

Basic residues predominate over residues 1 to 11 (MASGSRTKHSH). Positions 1-27 (MASGSRTKHSHQSGQGQVQAQSSGTSN) are disordered. Over residues 12–26 (QSGQGQVQAQSSGTS) the composition is skewed to low complexity. The 179-residue stretch at 231–409 (DVKLLCDTVV…AFGLQLNMEL (179 aa)) folds into the GAF domain. Residue Cys336 coordinates phytochromobilin. 2 PAS domains span residues 623–694 (VARE…LRGE) and 757–828 (DYKA…MIVL). In terms of domain architecture, Histidine kinase spans 905-1125 (YLCQEIKSPL…LIILDLPMTR (221 aa)).

This sequence belongs to the phytochrome family. In terms of assembly, homodimer. Post-translationally, contains one covalently linked phytochromobilin chromophore.

Functionally, regulatory photoreceptor which exists in two forms that are reversibly interconvertible by light: the Pr form that absorbs maximally in the red region of the spectrum and the Pfr form that absorbs maximally in the far-red region. Photoconversion of Pr to Pfr induces an array of morphogenic responses, whereas reconversion of Pfr to Pr cancels the induction of those responses. Pfr controls the expression of a number of nuclear genes including those encoding the small subunit of ribulose-bisphosphate carboxylase, chlorophyll A/B binding protein, protochlorophyllide reductase, rRNA, etc. It also controls the expression of its own gene(s) in a negative feedback fashion. In Nicotiana tabacum (Common tobacco), this protein is Phytochrome B (PHYB).